A 1259-amino-acid polypeptide reads, in one-letter code: Telomerase reverse transcriptase (1259 aa).

One can recognise a Reverse transcriptase domain in the interval 742–1067 (RGEPRKAVRH…SFMPWSGLLI (326 aa)). Mg(2+)-binding residues include D837, D999, and D1000.

The protein belongs to the reverse transcriptase family. Telomerase subfamily. Component of the telomerase ribonucleoprotein complex. In terms of tissue distribution, expressed in shoot apices and immature embryos.

The protein localises to the nucleus. It localises to the chromosome. The protein resides in the telomere. It carries out the reaction DNA(n) + a 2'-deoxyribonucleoside 5'-triphosphate = DNA(n+1) + diphosphate. Functionally, telomerase is a ribonucleoprotein enzyme essential for the replication of chromosome termini in most eukaryotes. It elongates telomeres. It is a reverse transcriptase that adds simple sequence repeats to chromosome ends by copying a template sequence within the RNA component of the enzyme. In Oryza sativa subsp. japonica (Rice), this protein is Telomerase reverse transcriptase (TERT).